We begin with the raw amino-acid sequence, 756 residues long: Sodium/hydrogen exchanger 8 (756 aa).

Topologically, residues 1–31 (MTSIIGAALPYKSPEKAIASSSYSAENDSSP) are extracellular. Asparagine 27 is a glycosylation site (N-linked (GlcNAc...) asparagine). The chain crosses the membrane as a helical span at residues 32–52 (VDAVIFAGTSLVLGTACRYLF). The Cytoplasmic portion of the chain corresponds to 53–56 (NGTR). A helical transmembrane segment spans residues 57 to 77 (VPYTVVLLVIGIFLGSLEYGT). Topologically, residues 78-89 (KHNLGKLGHGIR) are extracellular. A helical membrane pass occupies residues 90–110 (IWNGINPDLLLAVFLPVLLFE). At 111 to 125 (SSFSMDVHQIKRCMG) the chain is on the cytoplasmic side. A helical membrane pass occupies residues 126–146 (QMVLLAGPGVLISTFCLGALI). The Extracellular portion of the chain corresponds to 147–157 (KLTFPYNWDWK). The helical transmembrane segment at 158–178 (TSLLLGGLLGATDPVAVVALL) threads the bilayer. Topologically, residues 179–194 (KELGASKKMTTLIDGE) are cytoplasmic. The helical transmembrane segment at 195-215 (SLMNDGVSVVVFQLFFKMVMG) threads the bilayer. Over 216–225 (HNSDWGSIIK) the chain is Extracellular. Residues 226-248 (FLVQNSFGAVGIGLAFGIASVFW) traverse the membrane as a helical segment. The Cytoplasmic segment spans residues 249 to 251 (LKF). Residues 252 to 271 (IFNDTVAQITVTLSASYFAY) traverse the membrane as a helical segment. Residues 272–276 (YTAQE) are Extracellular-facing. A helical transmembrane segment spans residues 277–297 (WAGVSGILTVMILGMFFAAFA). At 298–311 (RTAFKGDSHQSLHH) the chain is on the cytoplasmic side. Residues 312–332 (FWEMAAYIANTLVFMLSGVII) form a helical membrane-spanning segment. The Extracellular portion of the chain corresponds to 333–350 (AESVLSGQTISYKGNSWS). Residues 351–371 (FLFLLYLYVQLSRCVVVGVLY) form a helical membrane-spanning segment. Over 372–385 (PLLCRSGYGLDWKE) the chain is Cytoplasmic. A helical membrane pass occupies residues 386 to 406 (SIILTWSGLRGAVSLSLALSV). The Extracellular portion of the chain corresponds to 407–422 (KQSSGNSYLSSDTGTR). Residues 423 to 443 (FLFLTGGIVFLTLVVNGSTTQ) form a helical membrane-spanning segment. Topologically, residues 444–756 (LLLHLLRMDT…RSLAIGETDA (313 aa)) are cytoplasmic.

The protein belongs to the monovalent cation:proton antiporter 1 (CPA1) transporter (TC 2.A.36) family.

The protein localises to the cell membrane. It catalyses the reaction Na(+)(in) + H(+)(out) = Na(+)(out) + H(+)(in). It carries out the reaction K(+)(in) + H(+)(out) = K(+)(out) + H(+)(in). May act in low affinity electroneutral exchange of protons for cations such as Na(+) or K(+) across membranes. May also exchange Li(+) and Cs(+) with a lower affinity. This chain is Sodium/hydrogen exchanger 8 (NHX8), found in Arabidopsis thaliana (Mouse-ear cress).